A 434-amino-acid chain; its full sequence is 3-phosphoshikimate 1-carboxyvinyltransferase (434 aa).

Positions 15, 16, and 20 each coordinate 3-phosphoshikimate. Phosphoenolpyruvate is bound at residue lysine 15. The phosphoenolpyruvate site is built by glycine 96 and arginine 124. 3-phosphoshikimate contacts are provided by serine 169, glutamine 171, serine 195, aspartate 319, and lysine 346. Glutamine 171 lines the phosphoenolpyruvate pocket. Catalysis depends on aspartate 319, which acts as the Proton acceptor. Residues arginine 350 and arginine 394 each coordinate phosphoenolpyruvate.

It belongs to the EPSP synthase family. As to quaternary structure, monomer.

The protein resides in the cytoplasm. It catalyses the reaction 3-phosphoshikimate + phosphoenolpyruvate = 5-O-(1-carboxyvinyl)-3-phosphoshikimate + phosphate. It functions in the pathway metabolic intermediate biosynthesis; chorismate biosynthesis; chorismate from D-erythrose 4-phosphate and phosphoenolpyruvate: step 6/7. In terms of biological role, catalyzes the transfer of the enolpyruvyl moiety of phosphoenolpyruvate (PEP) to the 5-hydroxyl of shikimate-3-phosphate (S3P) to produce enolpyruvyl shikimate-3-phosphate and inorganic phosphate. The sequence is that of 3-phosphoshikimate 1-carboxyvinyltransferase from Chlorobium phaeobacteroides (strain DSM 266 / SMG 266 / 2430).